A 448-amino-acid polypeptide reads, in one-letter code: MLWLALGPFPAMENQVLVIRIKIPNSGAVDWTVHSGPQLLFRDVLDVIGQVLPEATTTAFEYEDEDGDRITVRSDEEMKAMLSYYYSTVMEQQVNGQLIEPLQIFPRACKPPGERNIHGLKVNTRAGPSQHSSPAVSDSLPSNSLKKSSAELKKILANGQMNEQDIRYRDTLGHGNGGTVYKAYHVPSGKILAVKVILLDITLELQKQIMSELEILYKCDSSYIIGFYGAFFVENRISICTEFMDGGSLDVYRKMPEHVLGRIAVAVVKGLTYLWSLKILHRDVKPSNMLVNTRGQVKLCDFGVSTQLVNSIAKTYVGTNAYMAPERISGEQYGIHSDVWSLGISFMELALGRFPYPQIQKNQGSLMPLQLLQCIVDEDSPVLPVGEFSEPFVHFITQCMRKQPKERPAPEELMGHPFIVQFNDGNAAVVSMWVCRALEERRSQQGPP.

An interaction with MAPK7 region spans residues 18 to 25 (VIRIKIPN). One can recognise a PB1 domain in the interval 18-109 (VIRIKIPNSG…EPLQIFPRAC (92 aa)). The tract at residues 64–68 (DEDGD) is interaction with MAP3K2/MAP3K3. Residues 116 to 144 (NIHGLKVNTRAGPSQHSSPAVSDSLPSNS) form a disordered region. The interval 117–131 (IHGLKVNTRAGPSQH) is interaction with MAPK7. A compositionally biased stretch (polar residues) spans 126–144 (AGPSQHSSPAVSDSLPSNS). The 244-residue stretch at 166 to 409 (IRYRDTLGHG…MRKQPKERPA (244 aa)) folds into the Protein kinase domain. ATP contacts are provided by residues 172 to 180 (LGHGNGGTV) and Lys-195. The active-site Proton acceptor is Asp-283. Residue Ser-311 is modified to Phosphoserine. At Thr-315 the chain carries Phosphothreonine.

It belongs to the protein kinase superfamily. STE Ser/Thr protein kinase family. MAP kinase kinase subfamily. In terms of assembly, interacts with PARD6A, MAP3K3 and MAPK7. Forms a complex with SQSTM1 and PRKCZ or PRKCI. As to quaternary structure, (Microbial infection) Interacts with Yersinia YopJ. Requires Mg(2+) as cofactor. Post-translationally, activated by phosphorylation on Ser/Thr by MAP kinase kinase kinases. (Microbial infection) Yersinia YopJ may acetylate Ser/Thr residues, preventing phosphorylation and activation, thus blocking the MAPK signaling pathway. As to expression, expressed in many adult tissues. Abundant in heart and skeletal muscle.

It carries out the reaction L-seryl-[protein] + ATP = O-phospho-L-seryl-[protein] + ADP + H(+). It catalyses the reaction L-threonyl-[protein] + ATP = O-phospho-L-threonyl-[protein] + ADP + H(+). The enzyme catalyses L-tyrosyl-[protein] + ATP = O-phospho-L-tyrosyl-[protein] + ADP + H(+). In terms of biological role, acts as a scaffold for the formation of a ternary MAP3K2/MAP3K3-MAP3K5-MAPK7 signaling complex. Activation of this pathway appears to play a critical role in protecting cells from stress-induced apoptosis, neuronal survival and cardiac development and angiogenesis. As part of the MAPK/ERK signaling pathway, acts as a negative regulator of apoptosis in cardiomyocytes via promotion of STUB1/CHIP-mediated ubiquitination and degradation of ICER-type isoforms of CREM. The protein is Dual specificity mitogen-activated protein kinase kinase 5 (MAP2K5) of Homo sapiens (Human).